Reading from the N-terminus, the 800-residue chain is Internalin A (800 aa).

The first 35 residues, 1–35 (MRKKRYVWLKSILVAILVFGSGVWINTSNGTNAQA), serve as a signal peptide directing secretion. The region spanning 36 to 76 (ATITQDTPINQIFTDAALAEKMKTVLGKTNVTDTVSQTDLD) is the LRRNT domain. LRR repeat units follow at residues 77 to 98 (QVTT…EYLN), 99 to 120 (NLTQ…KDLT), 121 to 142 (KLVD…ANLT), 143 to 164 (NLTG…KNLT), 165 to 186 (NLNR…SGLT), 187 to 207 (NLQQ…ANLT), 208 to 229 (TLER…AKLT), 230 to 251 (NLES…GILT), 252 to 273 (NLDE…ASLT), 274 to 295 (NLTD…SGLT), 296 to 317 (KLTE…AGLT), 318 to 339 (ALTN…SNLK), 340 to 361 (NLTY…SSLT), 362 to 383 (KLQR…ANLT), and 384 to 405 (NINW…ANLT). The 90-residue stretch at 416–505 (AWTNAPVNYK…AIFNAKFHVD (90 aa)) folds into the LRRCT domain. A B-1 repeat occupies 518–587 (LLTEPAKPVK…TTSQTVDYQG (70 aa)). The interval 518-706 (LLTEPAKPVK…ITLYAQFTKN (189 aa)) is 3 X approximate tandem repeats, type B. Residues 588–657 (LLQEPTPPTK…STTQAVDYQG (70 aa)) form a B-2 repeat. Residues 658-706 (LLKEPKAPTKAGYTFKGWYDEKTDGKKWDFATDKMPANDITLYAQFTKN) form a B-3 repeat. The interval 705–757 (KNPVAPPTTGGNTPPTTNNGGNTTPPSANIPGSDTSNTSTGNSASTTSTMNAY) is disordered. A compositionally biased stretch (low complexity) spans 711–753 (PTTGGNTPPTTNNGGNTTPPSANIPGSDTSNTSTGNSASTTST). The LPXTG sorting signal signature appears at 767–771 (LPTTG). Residue threonine 770 is modified to Pentaglycyl murein peptidoglycan amidated threonine. Positions 771-800 (GDSDNALYLLLGLLAVGTAMALTKKARASK) are cleaved as a propeptide — removed by sortase A.

It belongs to the internalin family.

The protein localises to the secreted. It localises to the cell wall. Mediates the entry of Listeria monocytogenes into cells. Binds to host receptor cadherin-1 (E-cadherin, CDH1). This chain is Internalin A (inlA), found in Listeria monocytogenes serotype 1/2a (strain 10403S).